The primary structure comprises 229 residues: Large ribosomal subunit protein uL1 (229 aa).

It belongs to the universal ribosomal protein uL1 family. Part of the 50S ribosomal subunit.

In terms of biological role, binds directly to 23S rRNA. The L1 stalk is quite mobile in the ribosome, and is involved in E site tRNA release. Its function is as follows. Protein L1 is also a translational repressor protein, it controls the translation of the L11 operon by binding to its mRNA. The sequence is that of Large ribosomal subunit protein uL1 from Chlorobium phaeobacteroides (strain DSM 266 / SMG 266 / 2430).